A 434-amino-acid polypeptide reads, in one-letter code: MSQFVNVIGAGLAGSEAAWQIAKRGIKVNLYEMRPVKHTPAHHTDKFAELVCSNSLRANALTNAVGVLKEEMRHLDSAIIAAADESSVPAGGALAVDRHEFAANVTDRVKNHPNVTVFQEEVQSIPEGPTIIATGPLTSEALSKELKSLTGEEYLYFYDAAAPILEKDSIDMDKVYLKSRYDKGEAAYLNCPMTEEEFDRFYEALISAETVPLKEFEKEIFFEGCMPIEVMAKRGKKTMLFGPMKPVGLEDPKTGKRPYAVVQLRQDDAAGTLYNIVGFQTHLKWGDQKEVFRLIPGLEEAEIVRYGVMHRNTFINSPSLLKPTYQFKNREDLFFAGQMTGVEGYVESAASGLVAGINAARFVKGEELVTLPEETAIGSMAYYITSTNKKSFQPMNANFGLLKDLGVRIKNKQERYAEYAKRAIETIQTISKSL.

9–14 serves as a coordination point for FAD; the sequence is GAGLAG.

This sequence belongs to the MnmG family. TrmFO subfamily. Requires FAD as cofactor.

It is found in the cytoplasm. It catalyses the reaction uridine(54) in tRNA + (6R)-5,10-methylene-5,6,7,8-tetrahydrofolate + NADH + H(+) = 5-methyluridine(54) in tRNA + (6S)-5,6,7,8-tetrahydrofolate + NAD(+). The catalysed reaction is uridine(54) in tRNA + (6R)-5,10-methylene-5,6,7,8-tetrahydrofolate + NADPH + H(+) = 5-methyluridine(54) in tRNA + (6S)-5,6,7,8-tetrahydrofolate + NADP(+). Its function is as follows. Catalyzes the folate-dependent formation of 5-methyl-uridine at position 54 (M-5-U54) in all tRNAs. The chain is Methylenetetrahydrofolate--tRNA-(uracil-5-)-methyltransferase TrmFO from Bacillus pumilus (strain SAFR-032).